The sequence spans 420 residues: Maturation protein A2 (420 aa).

RNA-binding regions lie at residues 158–176, 226–236, and 294–298; these read IKYL…RAVK, QNRHDKIQRLL, and PVSDW.

The protein belongs to the Leviviricetes maturation protein family. In terms of assembly, interacts with host MurA; this interaction inhibits the first step in host cell wall synthesis. Interacts with the capsid protein.

It localises to the virion. In terms of biological role, induces host cell lysis. Inhibits host MurA activity thereby blocking the synthesis of murein precursors necessary for the host cell wall biosynthesis. May be responsible for the attachment to the host pilus. Makes extensive contacts with the viral genome. This is Maturation protein A2 from Escherichia virus Qbeta (Bacteriophage Q-beta).